The chain runs to 339 residues: Anthranilate phosphoribosyltransferase (339 aa).

5-phospho-alpha-D-ribose 1-diphosphate contacts are provided by residues Gly-80, 83 to 84 (GD), Thr-88, 90 to 93 (NIST), 108 to 116 (KHGNRSVSS), and Ser-120. Gly-80 contributes to the anthranilate binding site. Mg(2+) is bound at residue Ser-92. Asn-111 contributes to the anthranilate binding site. Arg-166 is an anthranilate binding site. Mg(2+)-binding residues include Asp-225 and Glu-226.

The protein belongs to the anthranilate phosphoribosyltransferase family. Homodimer. The cofactor is Mg(2+).

It carries out the reaction N-(5-phospho-beta-D-ribosyl)anthranilate + diphosphate = 5-phospho-alpha-D-ribose 1-diphosphate + anthranilate. It participates in amino-acid biosynthesis; L-tryptophan biosynthesis; L-tryptophan from chorismate: step 2/5. Catalyzes the transfer of the phosphoribosyl group of 5-phosphorylribose-1-pyrophosphate (PRPP) to anthranilate to yield N-(5'-phosphoribosyl)-anthranilate (PRA). The chain is Anthranilate phosphoribosyltransferase from Alkaliphilus metalliredigens (strain QYMF).